We begin with the raw amino-acid sequence, 130 residues long: HTH-type transcriptional regulator KmtR (130 aa).

Residues 10-104 (LPDDQVCLVV…DAVFNAEHAG (95 aa)) form the HTH arsR-type domain. Residues 44–67 (VNELAEQVGKPAPSVSQHLAKLRM) constitute a DNA-binding region (H-T-H motif). The tract at residues 110–130 (HHRAAGGLQSVAKASATKDVG) is disordered.

With respect to regulation, binding to DNA is inhibited by nickel and cobalt ions. Represses expression of Rv2025c and its own expression. Acts by binding to the promoter regions. The protein is HTH-type transcriptional regulator KmtR (kmtR) of Mycobacterium tuberculosis (strain ATCC 25618 / H37Rv).